A 192-amino-acid chain; its full sequence is E3 ubiquitin-protein ligase RNF185 (192 aa).

A compositionally biased stretch (low complexity) spans 1-27; the sequence is MASKGPSASASPENSSAGGPSGSSNGA. A disordered region spans residues 1–30; sequence MASKGPSASASPENSSAGGPSGSSNGAGES. At 1-130 the chain is on the cytoplasmic side; it reads MASKGPSASA…GGFQGFGFGD (130 aa). Residues 29–80 form a required for ubiquitin ligase activity and protection against ER stress-induced cell death region; it reads ESGGQDSTFECNICLDTAKDAVISLCGHLFCWPCLHQWLETRPNRQVCPVCK. The RING-type zinc-finger motif lies at 39 to 80; it reads CNICLDTAKDAVISLCGHLFCWPCLHQWLETRPNRQVCPVCK. A disordered region spans residues 90 to 123; it reads PLYGRGSTGQQDPREKTPPRPQGQRPEPENRGGF. A helical membrane pass occupies residues 131 to 151; that stretch reads GGFQMSFGIGAFPFGIFATAF. The Mitochondrial intermembrane portion of the chain corresponds to 152 to 171; it reads NINDGRPPPAVPGTPQYVDE. The chain crosses the membrane as a helical span at residues 172–192; that stretch reads QFLSRLFLFVALVIMFWLLIA.

As to quaternary structure, interacts with ATG5 and BNIP1. Ubiquitously expressed.

The protein localises to the mitochondrion outer membrane. Its subcellular location is the endoplasmic reticulum membrane. The enzyme catalyses S-ubiquitinyl-[E2 ubiquitin-conjugating enzyme]-L-cysteine + [acceptor protein]-L-lysine = [E2 ubiquitin-conjugating enzyme]-L-cysteine + N(6)-ubiquitinyl-[acceptor protein]-L-lysine.. It functions in the pathway protein modification; protein ubiquitination. Functionally, E3 ubiquitin-protein ligase that regulates selective mitochondrial autophagy by mediating 'Lys-63'-linked polyubiquitination of BNIP1. Acts in the endoplasmic reticulum (ER)-associated degradation (ERAD) pathway, which targets misfolded proteins that accumulate in the endoplasmic reticulum (ER) for ubiquitination and subsequent proteasome-mediated degradation. Protects cells from ER stress-induced apoptosis. Responsible for the cotranslational ubiquitination and degradation of CFTR in the ERAD pathway. Also acts as a regulator of the innate antiviral response by catalyzing 'Lys-27'-linked polyubiquitination of CGAS at 'Lys-173' and 'Lys-384', thereby promoting CGAS cyclic GMP-AMP synthase activity. Preferentially associates with the E2 enzymes UBE2J1 and UBE2J2. In Homo sapiens (Human), this protein is E3 ubiquitin-protein ligase RNF185.